Consider the following 180-residue polypeptide: MASSLMSNAITAVVGASGAQANMVAPFNGLKSIASFPVTRKSNDITSIASNGGRVQCMQVWPPVGKKKFETLSYLPPLSDAQLLAQVQYLLNNGWIPCIEFELEHPFVYRENHRSPGYQDGRYWTMWKLPMYGCTDPAQVLNEVEEAKKAYPSAFIRIIGFDNKRQVQCVSFIAFKPPGY.

The N-terminal 56 residues, 1–56 (MASSLMSNAITAVVGASGAQANMVAPFNGLKSIASFPVTRKSNDITSIASNGGRVQ), are a transit peptide targeting the chloroplast.

Belongs to the RuBisCO small chain family. In terms of assembly, heterohexadecamer of 8 large and 8 small subunits.

Its subcellular location is the plastid. It is found in the chloroplast. RuBisCO catalyzes two reactions: the carboxylation of D-ribulose 1,5-bisphosphate, the primary event in carbon dioxide fixation, as well as the oxidative fragmentation of the pentose substrate. Both reactions occur simultaneously and in competition at the same active site. Although the small subunit is not catalytic it is essential for maximal activity. The protein is Ribulose bisphosphate carboxylase small subunit, chloroplastic 3 of Amaranthus hypochondriacus (Prince-of-Wales feather).